Reading from the N-terminus, the 126-residue chain is MAILGLGTDIVEIARIEAVIARSGERLARRVLSDNEWAIWKTHHQPVRFLAKRFAVKEAAAKAFGTGIRNGLAFNQFEVFNDELGKPRLRLWGEALKLAEKLGVVNMHVTLADERHYACATVIIES.

D9 and E58 together coordinate Mg(2+).

The protein belongs to the P-Pant transferase superfamily. AcpS family. Mg(2+) serves as cofactor.

The protein resides in the cytoplasm. The catalysed reaction is apo-[ACP] + CoA = holo-[ACP] + adenosine 3',5'-bisphosphate + H(+). Functionally, transfers the 4'-phosphopantetheine moiety from coenzyme A to a Ser of acyl-carrier-protein. The protein is Holo-[acyl-carrier-protein] synthase of Escherichia coli O139:H28 (strain E24377A / ETEC).